The sequence spans 728 residues: Polyribonucleotide nucleotidyltransferase (728 aa).

Mg(2+)-binding residues include Asp503 and Asp509. In terms of domain architecture, KH spans 570 to 629; sequence PRLTTIKIPSDCIGMVIGKGGETIRGITEETGAEINIADDGTVTIACTTKEGTDAALATI. The region spanning 639 to 713 is the S1 motif domain; the sequence is GNIYVGKVRD…GKTKFALSIK (75 aa).

Belongs to the polyribonucleotide nucleotidyltransferase family. It depends on Mg(2+) as a cofactor.

It is found in the cytoplasm. It catalyses the reaction RNA(n+1) + phosphate = RNA(n) + a ribonucleoside 5'-diphosphate. Functionally, involved in mRNA degradation. Catalyzes the phosphorolysis of single-stranded polyribonucleotides processively in the 3'- to 5'-direction. This chain is Polyribonucleotide nucleotidyltransferase, found in Chlorobium chlorochromatii (strain CaD3).